The following is a 970-amino-acid chain: m7GpppN-mRNA hydrolase (970 aa).

The 128-residue stretch at 101–228 (KSIPVRGAAI…IKYYLINSMM (128 aa)) folds into the Nudix hydrolase domain. Ser-116 bears the Phosphoserine mark. Positions 134–155 (GKISKDENDIDCCIREVKEEIG) match the Nudix box motif. 2 residues coordinate Mn(2+): Glu-149 and Glu-153. The span at 302–314 (QHLKEQSGEHNQQ) shows a compositional bias: basic and acidic residues. Disordered regions lie at residues 302 to 341 (QHLK…ANNK), 417 to 465 (AVSQ…PKLK), 501 to 520 (SSQK…NDSV), and 528 to 692 (YEDF…LSST). Low complexity predominate over residues 315-334 (KDQQSSFSSQQQPSIFPSLS). Position 439 is a phosphoserine (Ser-439). The span at 528 to 539 (YEDFESSSDEEV) shows a compositional bias: acidic residues. A compositionally biased stretch (basic and acidic residues) spans 560 to 576 (SEKDSRRSQKEKPRNDA). The span at 577–590 (SKTNLNASAESNSV) shows a compositional bias: polar residues. The span at 596-608 (KSSPSTQSKQNSS) shows a compositional bias: low complexity. Acidic residues predominate over residues 625–637 (DAYEVFESSSDEE). A Phosphothreonine modification is found at Thr-677. Residues 677–691 (TESNKSINETVGLSS) are compositionally biased toward polar residues. Phosphoserine occurs at positions 679, 682, 751, 771, 773, and 778. Residues 831–867 (LKKNDSTGYPRTEGGPSSEMSTSMKRNDATNNQELDK) are disordered. Positions 848 to 863 (SEMSTSMKRNDATNNQ) are enriched in polar residues.

Belongs to the Nudix hydrolase family. DCP2 subfamily. As to quaternary structure, component of the decapping complex composed of DCP1 and DCP2. Interacts with mRNA, LSM2, LSM4 and LSM8. Interacts with EDC3. The cofactor is Mn(2+).

It localises to the cytoplasm. The protein resides in the P-body. It carries out the reaction a 5'-end (N(7)-methyl 5'-triphosphoguanosine)-ribonucleoside in mRNA + H2O = N(7)-methyl-GDP + a 5'-end phospho-ribonucleoside in mRNA + 2 H(+). In terms of biological role, catalytic component of the decapping complex necessary for the degradation of mRNAs, both in normal mRNA turnover and in nonsense-mediated mRNA decay. Removes the 7-methyl guanine cap structure from mRNA molecules, yielding a 5'-phosphorylated mRNA fragment and 7m-GDP. Decapping is the major pathway of mRNA degradation in yeast and occurs through deadenylation, decapping and subsequent 5' to 3' exonucleolytic decay of the transcript body. Blocks autophagy in nutrient-rich conditions by repressing the expression of ATG-related genes through degradation of their transcripts. The chain is m7GpppN-mRNA hydrolase from Saccharomyces cerevisiae (strain ATCC 204508 / S288c) (Baker's yeast).